The following is a 98-amino-acid chain: C-X-C motif chemokine 10 (98 aa).

An N-terminal signal peptide occupies residues 1 to 21 (MNQTAILICCLVFLTLSGIQG). A Citrulline modification is found at Arg-26. 2 disulfide bridges follow: Cys-30–Cys-57 and Cys-32–Cys-74.

Belongs to the intercrine alpha (chemokine CxC) family.

Its subcellular location is the secreted. In terms of biological role, chemotactic for monocytes and T-lymphocytes. Binds to CXCR3. The chain is C-X-C motif chemokine 10 (CXCL10) from Macaca nemestrina (Pig-tailed macaque).